A 247-amino-acid chain; its full sequence is 1-(5-phosphoribosyl)-5-[(5-phosphoribosylamino)methylideneamino] imidazole-4-carboxamide isomerase (247 aa).

The active-site Proton acceptor is the Asp8. The active-site Proton donor is Asp131.

Belongs to the HisA/HisF family.

Its subcellular location is the cytoplasm. The enzyme catalyses 1-(5-phospho-beta-D-ribosyl)-5-[(5-phospho-beta-D-ribosylamino)methylideneamino]imidazole-4-carboxamide = 5-[(5-phospho-1-deoxy-D-ribulos-1-ylimino)methylamino]-1-(5-phospho-beta-D-ribosyl)imidazole-4-carboxamide. It functions in the pathway amino-acid biosynthesis; L-histidine biosynthesis; L-histidine from 5-phospho-alpha-D-ribose 1-diphosphate: step 4/9. The polypeptide is 1-(5-phosphoribosyl)-5-[(5-phosphoribosylamino)methylideneamino] imidazole-4-carboxamide isomerase (Acidovorax sp. (strain JS42)).